A 179-amino-acid polypeptide reads, in one-letter code: MKFLFDLFPVILFFVAFKLFGIYPATAVAIGATVVQIAWVHFRHGKAEPMQWVSLAIIAVFGGATILLHNETFIKWKPTVLYWLFAVTLIGSVIGWRKNLIRAMMEKQVTLPEPMWGRLNVAWAGFFAVMGVLNLYVAYQFSTDTWVNFKLFGSMGLMLVFIVAQSIWLSRHIQETPSE.

Transmembrane regions (helical) follow at residues 3-23 (FLFD…FGIY), 49-69 (PMQW…ILLH), 76-96 (WKPT…VIGW), 121-141 (VAWA…AYQF), and 149-169 (FKLF…SIWL).

Belongs to the YciB family.

The protein localises to the cell inner membrane. Plays a role in cell envelope biogenesis, maintenance of cell envelope integrity and membrane homeostasis. In Cupriavidus metallidurans (strain ATCC 43123 / DSM 2839 / NBRC 102507 / CH34) (Ralstonia metallidurans), this protein is Inner membrane-spanning protein YciB.